Consider the following 397-residue polypeptide: MALLRGVFIVAAKRTPFGAYGGLLKDFTATDLTEFAARAALSAGKVPPETIDSVIVGNVMQSSSDAAYLARHVGLRVGVPTETGALTLNRLCGSGFQSIVSGCQEICSKDAEVVLCGGTESMSQSPYSVRNVRFGTKFGLDLKLEDTLWAGLTDQHVKLPMGMTAENLAAKYNISREDCDRYALQSQQRWKAANEAGYFNEEMAPIEVKTKKGKQTMQVDEHARPQTTLEQLQNLPPVFKKEGTVTAGNASGMSDGAGVVIIASEDAVKKHNFTPLARVVGYFVSGCDPAIMGIGPVPAITGALKKAGLSLKDMDLIDVNEAFAPQFLAVQKSLDLDPSKTNVSGGAIALGHPLGGSGSRITAHLVHELRRRGGKYAVGSACIGGGQGISLIIQNTA.

A mitochondrion; not cleaved-targeting transit peptide spans 1–16; the sequence is MALLRGVFIVAAKRTP. At K25 the chain carries N6-acetyllysine; alternate. Residue K25 is modified to N6-succinyllysine; alternate. K45 is modified (N6-succinyllysine). Residue C92 is the Acyl-thioester intermediate of the active site. T119 carries the post-translational modification Phosphothreonine. A Phosphoserine modification is found at S121. Y127 is subject to Phosphotyrosine. T136 carries the phosphothreonine modification. An N6-acetyllysine; alternate mark is found at K137, K143, K158, K171, K191, and K209. An N6-succinyllysine; alternate mark is found at K137, K143, K158, K171, K191, and K209. K211, K212, and K214 each carry N6-succinyllysine. Residues R224 and T227 each contribute to the CoA site. K240 carries the post-translational modification N6-succinyllysine. K241 carries the N6-acetyllysine modification. S251 contacts CoA. K269 and K270 each carry N6-acetyllysine. K305 is modified (N6-acetyllysine; alternate). K305 carries the N6-succinyllysine; alternate modification. At S310 the chain carries Phosphoserine. Residue K312 is modified to N6-acetyllysine; alternate. An N6-succinyllysine; alternate modification is found at K312. Residue S333 is modified to Phosphoserine. An N6-acetyllysine modification is found at K340. Position 344 is a phosphoserine (S344). K375 is modified (N6-acetyllysine). Catalysis depends on C382, which acts as the Proton donor/acceptor.

The protein belongs to the thiolase-like superfamily. Thiolase family. In terms of assembly, homotetramer. Interacts with BNIP3. In terms of tissue distribution, expressed in liver, brown adipose tissue and heart (at protein level).

Its subcellular location is the mitochondrion. The enzyme catalyses an acyl-CoA + acetyl-CoA = a 3-oxoacyl-CoA + CoA. It catalyses the reaction 2 acetyl-CoA = acetoacetyl-CoA + CoA. It carries out the reaction acetyl-CoA + H2O = acetate + CoA + H(+). The catalysed reaction is propanoyl-CoA + H2O = propanoate + CoA + H(+). The enzyme catalyses butanoyl-CoA + H2O = butanoate + CoA + H(+). It catalyses the reaction hexanoyl-CoA + H2O = hexanoate + CoA + H(+). It carries out the reaction octanoyl-CoA + H2O = octanoate + CoA + H(+). The catalysed reaction is decanoyl-CoA + H2O = decanoate + CoA + H(+). The enzyme catalyses dodecanoyl-CoA + H2O = dodecanoate + CoA + H(+). It catalyses the reaction tetradecanoyl-CoA + H2O = tetradecanoate + CoA + H(+). It carries out the reaction hexadecanoyl-CoA + H2O = hexadecanoate + CoA + H(+). Its pathway is lipid metabolism; fatty acid beta-oxidation. With respect to regulation, the 3-oxoacetyl-CoA thiolase activity is inhibited by acetyl-CoA while the acetyl-CoA hydrolase activity is inhibited by acetoacetyl-CoA. In the production of energy from fats, this is one of the enzymes that catalyzes the last step of the mitochondrial beta-oxidation pathway, an aerobic process breaking down fatty acids into acetyl-CoA. Using free coenzyme A/CoA, catalyzes the thiolytic cleavage of medium- to long-chain unbranched 3-oxoacyl-CoAs into acetyl-CoA and a fatty acyl-CoA shortened by two carbon atoms. Also catalyzes the condensation of two acetyl-CoA molecules into acetoacetyl-CoA and could be involved in the production of ketone bodies. Also displays hydrolase activity on various fatty acyl-CoAs. Thereby, could be responsible for the production of acetate in a side reaction to beta-oxidation. Abolishes BNIP3-mediated apoptosis and mitochondrial damage. In Rattus norvegicus (Rat), this protein is 3-ketoacyl-CoA thiolase, mitochondrial (Acaa2).